A 598-amino-acid polypeptide reads, in one-letter code: Probable transporter mch1 (598 aa).

Residues 1-49 (MASPTPAPRPDQISASTPLLQSDSTSSCASSIRSLSPSRRRHRNGRTSP) are disordered. A compositionally biased stretch (low complexity) spans 22-37 (SDSTSSCASSIRSLSP). An N-linked (GlcNAc...) asparagine glycan is attached at Asn57. The next 6 helical transmembrane spans lie at 63–83 (ALLS…GHIF), 96–116 (GLSS…GYMC), 122–142 (GPLS…AAGV), 164–184 (LAYA…CSMY), 202–222 (GLAL…QSQL), and 241–261 (VFHF…LGTF). A disordered region spans residues 315–334 (AGILDPSKPDNDSDSEEEDD). Residue Asn325 is glycosylated (N-linked (GlcNAc...) asparagine). 6 consecutive transmembrane segments (helical) span residues 355–375 (HTMW…EAFI), 405–425 (IVGI…DLLA), 453–473 (FLLF…SGWI), 486–506 (LVGA…TVIW), 516–536 (GIVA…YSAV), and 565–585 (SAFW…LWAW).

This sequence belongs to the major facilitator superfamily.

The protein localises to the vacuole membrane. In terms of biological role, probable transporter. In Neurospora crassa (strain ATCC 24698 / 74-OR23-1A / CBS 708.71 / DSM 1257 / FGSC 987), this protein is Probable transporter mch1 (mch1).